The chain runs to 491 residues: MNANELTIAEARDALARGELSAVDLTMACLTAIDAGTPLNAFVHTTPEIALDQARAADARRGAGAGALNGIPLGIKDLFCTRGVASQAASNILRGFKPEYESTVTSKLFEAGAVMLGKLNMDEFAMGSSNETSCYGDAVNPWKVDDRRLTPGGSSGGSAAAVAADLCLAATGTDTGGSIRQPAAFTGIVGIKPTYGRVSRWGIVAFASSLDQAGPMTKSVRDAAILLGAMAGHDPKDSTSADIPVPDFEAALTGDIRGRKIGIPREYRMEGMPAEIEALWARGREMLADAGAEIVDISLPHTKYALPAYYVIAPAEASSNLARYDGVRYGHRARLGQGDGIVDMYEKTRAEGFGKEVQRRVMIGTYVLSAGFYDAYYNRARKVRALIKRDFDEAFAAGVDAILTPATPSSAFGLGEMADADPVAMYLNDVFTVTVNLAGLPGISVPVGLDAKGLPLGLQLIGRPWDEAGLLNHAHVLERAAGFVEKPRKWW.

Active-site charge relay system residues include lysine 76 and serine 154. Serine 178 functions as the Acyl-ester intermediate in the catalytic mechanism.

Belongs to the amidase family. GatA subfamily. As to quaternary structure, heterotrimer of A, B and C subunits.

It catalyses the reaction L-glutamyl-tRNA(Gln) + L-glutamine + ATP + H2O = L-glutaminyl-tRNA(Gln) + L-glutamate + ADP + phosphate + H(+). Allows the formation of correctly charged Gln-tRNA(Gln) through the transamidation of misacylated Glu-tRNA(Gln) in organisms which lack glutaminyl-tRNA synthetase. The reaction takes place in the presence of glutamine and ATP through an activated gamma-phospho-Glu-tRNA(Gln). This chain is Glutamyl-tRNA(Gln) amidotransferase subunit A, found in Cereibacter sphaeroides (strain ATCC 17029 / ATH 2.4.9) (Rhodobacter sphaeroides).